Reading from the N-terminus, the 118-residue chain is Large ribosomal subunit protein bL19 (118 aa).

This sequence belongs to the bacterial ribosomal protein bL19 family.

This protein is located at the 30S-50S ribosomal subunit interface and may play a role in the structure and function of the aminoacyl-tRNA binding site. The chain is Large ribosomal subunit protein bL19 from Beutenbergia cavernae (strain ATCC BAA-8 / DSM 12333 / CCUG 43141 / JCM 11478 / NBRC 16432 / NCIMB 13614 / HKI 0122).